We begin with the raw amino-acid sequence, 115 residues long: U3-lycotoxin-Ls1n (115 aa).

Residues 1–20 (MKFVLLFGVLLVTLFSYSSA) form the signal peptide. Residues 21-44 (EMLDDFDQADEDELLSLIEKEEAR) constitute a propeptide that is removed on maturation. 4 disulfides stabilise this stretch: Cys48–Cys63, Cys55–Cys72, Cys62–Cys87, and Cys74–Cys85.

Belongs to the neurotoxin 19 (CSTX) family. 01 subfamily. As to expression, expressed by the venom gland.

Its subcellular location is the secreted. The polypeptide is U3-lycotoxin-Ls1n (Lycosa singoriensis (Wolf spider)).